Consider the following 57-residue polypeptide: UPF0391 membrane protein XOO1885 (57 aa).

Helical transmembrane passes span 4-24 (WAII…GGMA) and 33-53 (FLFW…MTIA).

The protein belongs to the UPF0391 family.

The protein resides in the cell membrane. The polypeptide is UPF0391 membrane protein XOO1885 (Xanthomonas oryzae pv. oryzae (strain KACC10331 / KXO85)).